Reading from the N-terminus, the 111-residue chain is Phosphoribosyl-ATP pyrophosphatase (111 aa).

The protein belongs to the PRA-PH family.

The protein localises to the cytoplasm. The enzyme catalyses 1-(5-phospho-beta-D-ribosyl)-ATP + H2O = 1-(5-phospho-beta-D-ribosyl)-5'-AMP + diphosphate + H(+). It participates in amino-acid biosynthesis; L-histidine biosynthesis; L-histidine from 5-phospho-alpha-D-ribose 1-diphosphate: step 2/9. The polypeptide is Phosphoribosyl-ATP pyrophosphatase (Pseudomonas putida (strain W619)).